The sequence spans 302 residues: Heme A synthase (302 aa).

Topologically, residues 1–8 are cytoplasmic; sequence MFRKQNLK. A helical membrane pass occupies residues 9-29; sequence WLGVLATIIMTFVQLGGALVT. At 30–67 the chain is on the extracellular side; that stretch reads KTGSEDGCGSSWPLCNGALLPENLPIQTIIELSHRAVS. A disulfide bridge links C37 with C44. The active site involves E60. H63 is a binding site for heme o. The chain crosses the membrane as a helical span at residues 68-88; the sequence is AISLIVVLWLVITAWKNIGYI. The Cytoplasmic portion of the chain corresponds to 89–93; sequence KEIKP. A helical transmembrane segment spans residues 94–114; the sequence is LSIISVGFLLVQALVGAAAVI. Over 115–125 the chain is Extracellular; the sequence is WQQNPYVLALH. Position 125 (H125) interacts with heme o. The chain crosses the membrane as a helical span at residues 126–146; it reads FGISLISFSSVFLMTLIIFSI. Residues 147 to 161 are Cytoplasmic-facing; that stretch reads DKKYEADILFIHKPL. Residues 162 to 182 traverse the membrane as a helical segment; that stretch reads RILTWLMAIIVYLTIYTGALV. The Extracellular segment spans residues 183 to 215; the sequence is RHTKSSLAYGAWPIPFDDIVPHNAHDWVQFSHR. H214 lines the heme b pocket. Residues 216–236 traverse the membrane as a helical segment; the sequence is GMALITFIWIMITFIHAIKNY. Topologically, residues 237–244 are cytoplasmic; it reads SDNRTVRY. A helical transmembrane segment spans residues 245 to 265; that stretch reads GYTASFILVILQVITGALSVI. Topologically, residues 266–270 are extracellular; it reads TNVNL. A helical membrane pass occupies residues 271–291; the sequence is IIALFHALFITYLFGMIAYFI. H276 serves as a coordination point for heme b. Topologically, residues 292 to 302 are cytoplasmic; sequence LLMLRTTRSQK.

Belongs to the COX15/CtaA family. Type 1 subfamily. In terms of assembly, interacts with CtaB. It depends on heme b as a cofactor.

It localises to the cell membrane. It carries out the reaction Fe(II)-heme o + 2 A + H2O = Fe(II)-heme a + 2 AH2. Its pathway is porphyrin-containing compound metabolism; heme A biosynthesis; heme A from heme O: step 1/1. In terms of biological role, catalyzes the conversion of heme O to heme A by two successive hydroxylations of the methyl group at C8. The first hydroxylation forms heme I, the second hydroxylation results in an unstable dihydroxymethyl group, which spontaneously dehydrates, resulting in the formyl group of heme A. The sequence is that of Heme A synthase from Staphylococcus epidermidis (strain ATCC 35984 / DSM 28319 / BCRC 17069 / CCUG 31568 / BM 3577 / RP62A).